The chain runs to 246 residues: Acetoacetate decarboxylase (246 aa).

The active-site Schiff-base intermediate with acetoacetate is K116.

Belongs to the ADC family.

The catalysed reaction is acetoacetate + H(+) = acetone + CO2. In terms of biological role, catalyzes the conversion of acetoacetate to acetone and carbon dioxide. This is Acetoacetate decarboxylase from Burkholderia cenocepacia (strain HI2424).